Consider the following 835-residue polypeptide: Phosphatidylinositol 4-kinase beta (835 aa).

Disordered stretches follow at residues 1–61 (MGDT…PLDV), 99–139 (SSAS…VRRR), and 267–341 (PSSQ…PVRL). The span at 19-59 (SPSTSTTSSLSLPSSPSSGPHPLTSSSPSTSEGLPTSSPPL) shows a compositional bias: low complexity. The 204-residue stretch at 59-262 (LDVISEGLGE…GTKLRKLILS (204 aa)) folds into the PIK helical domain. Basic and acidic residues-rich tracts occupy residues 125-134 (ISEEEVEPIK) and 267-276 (PSSQRIRREV). The segment covering 277–288 (PQPPPPYPPPLH) has biased composition (pro residues). Residues 311-332 (DATVSISLSSNLKRTASNPKVE) show a composition bias toward polar residues. A PI3K/PI4K catalytic domain is found at 554–820 (EPWQEKVRRI…MVDGSMRSIT (267 aa)). The G-loop stretch occupies residues 560–566 (VRRIREG). The catalytic loop stretch occupies residues 687 to 695 (QVKDRHNGN). An activation loop region spans residues 706–730 (HIDFGFILSSSPRNLGFETSAFKLT).

It belongs to the PI3/PI4-kinase family. Type III PI4K subfamily. Requires Mg(2+) as cofactor. It depends on Mn(2+) as a cofactor. In terms of tissue distribution, expressed in the inner ear otic vesicles.

The protein localises to the endomembrane system. Its subcellular location is the mitochondrion outer membrane. The protein resides in the rough endoplasmic reticulum membrane. The enzyme catalyses a 1,2-diacyl-sn-glycero-3-phospho-(1D-myo-inositol) + ATP = a 1,2-diacyl-sn-glycero-3-phospho-(1D-myo-inositol 4-phosphate) + ADP + H(+). Its function is as follows. Phosphorylates phosphatidylinositol (PI) in the first committed step in the production of the second messenger inositol-1,4,5,-trisphosphate (PIP). May play an important role the in inner ear development. This Danio rerio (Zebrafish) protein is Phosphatidylinositol 4-kinase beta (pi4kb).